We begin with the raw amino-acid sequence, 110 residues long: Small ribosomal subunit protein uS10 (110 aa).

The protein belongs to the universal ribosomal protein uS10 family. In terms of assembly, part of the 30S ribosomal subunit.

Functionally, involved in the binding of tRNA to the ribosomes. This chain is Small ribosomal subunit protein uS10, found in Ehrlichia ruminantium (strain Gardel).